A 442-amino-acid polypeptide reads, in one-letter code: Adenylosuccinate synthetase (442 aa).

Residues 16 to 22 (GDEGKGK) and 44 to 46 (GHT) each bind GTP. The Proton acceptor role is filled by D17. Mg(2+)-binding residues include D17 and G44. IMP contacts are provided by residues 17–20 (DEGK), 42–45 (NAGH), T133, R147, Q228, T243, and R307. H45 serves as the catalytic Proton donor. 303 to 309 (AVTGRPR) contributes to the substrate binding site. GTP is bound by residues R309, 335 to 337 (KLD), and 417 to 419 (STG).

It belongs to the adenylosuccinate synthetase family. Homodimer. Mg(2+) serves as cofactor.

The protein resides in the cytoplasm. It catalyses the reaction IMP + L-aspartate + GTP = N(6)-(1,2-dicarboxyethyl)-AMP + GDP + phosphate + 2 H(+). Its pathway is purine metabolism; AMP biosynthesis via de novo pathway; AMP from IMP: step 1/2. Functionally, plays an important role in the de novo pathway of purine nucleotide biosynthesis. Catalyzes the first committed step in the biosynthesis of AMP from IMP. This chain is Adenylosuccinate synthetase, found in Koribacter versatilis (strain Ellin345).